The primary structure comprises 209 residues: dITP/XTP pyrophosphatase (209 aa).

Residue 7–12 (SSHGYK) coordinates substrate. Catalysis depends on D70, which acts as the Proton acceptor. D70 serves as a coordination point for Mg(2+). Substrate-binding positions include S71, 154-157 (FGYD), K177, and 182-183 (HR).

It belongs to the HAM1 NTPase family. In terms of assembly, homodimer. It depends on Mg(2+) as a cofactor.

It catalyses the reaction XTP + H2O = XMP + diphosphate + H(+). It carries out the reaction dITP + H2O = dIMP + diphosphate + H(+). The catalysed reaction is ITP + H2O = IMP + diphosphate + H(+). In terms of biological role, pyrophosphatase that catalyzes the hydrolysis of nucleoside triphosphates to their monophosphate derivatives, with a high preference for the non-canonical purine nucleotides XTP (xanthosine triphosphate), dITP (deoxyinosine triphosphate) and ITP. Seems to function as a house-cleaning enzyme that removes non-canonical purine nucleotides from the nucleotide pool, thus preventing their incorporation into DNA/RNA and avoiding chromosomal lesions. In Chlamydia trachomatis serovar A (strain ATCC VR-571B / DSM 19440 / HAR-13), this protein is dITP/XTP pyrophosphatase.